We begin with the raw amino-acid sequence, 206 residues long: Superoxide dismutase [Mn] (206 aa).

His27, His82, Asp168, and His172 together coordinate Mn(2+).

It belongs to the iron/manganese superoxide dismutase family. As to quaternary structure, homodimer. Mn(2+) serves as cofactor.

It catalyses the reaction 2 superoxide + 2 H(+) = H2O2 + O2. Destroys superoxide anion radicals which are normally produced within the cells and which are toxic to biological systems. This chain is Superoxide dismutase [Mn] (sodA), found in Escherichia coli (strain K12).